We begin with the raw amino-acid sequence, 1331 residues long: Lysine-specific demethylase 3A-A (1331 aa).

Disordered stretches follow at residues 243–280, 358–381, and 497–532; these read LNDKSRKPRAPKRKSQDTESEDQTELKQTRNEEVPSKD, TPPQANSPPSFGAATPQGKGTQNL, and KVVKKPENNHTSVRAIKPQEPPYPKSPNKNDGVTYP. The span at 266–280 shows a compositional bias: basic and acidic residues; it reads TELKQTRNEEVPSKD. A C6-type zinc finger spans residues 683–708; sequence CDACDTTIFNLHWVCPKCGFGVCVDC. An LXXLL motif motif is present at residues 894–898; sequence LRNLL. Residues 1086 to 1291 form the JmjC domain; that stretch reads RREGKLNLAA…HCFWLTQEFR (206 aa). 3 residues coordinate Fe cation: His1130, Asp1132, and His1259.

This sequence belongs to the JHDM2 histone demethylase family. It depends on Fe(2+) as a cofactor.

It is found in the cytoplasm. The protein resides in the nucleus. The enzyme catalyses N(6),N(6)-dimethyl-L-lysyl(9)-[histone H3] + 2 2-oxoglutarate + 2 O2 = L-lysyl(9)-[histone H3] + 2 formaldehyde + 2 succinate + 2 CO2. Its function is as follows. Histone demethylase that specifically demethylates 'Lys-9' of histone H3, thereby playing a central role in histone code. Preferentially demethylates mono- and dimethylated H3 'Lys-9' residue, with a preference for dimethylated residue, while it has weak or no activity on trimethylated H3 'Lys-9'. Demethylation of Lys residue generates formaldehyde and succinate. The chain is Lysine-specific demethylase 3A-A (kdm3a-a) from Xenopus laevis (African clawed frog).